The chain runs to 279 residues: 3-methyl-2-oxobutanoate hydroxymethyltransferase (279 aa).

Residues Asp43 and Asp82 each coordinate Mg(2+). 3-methyl-2-oxobutanoate-binding positions include 43 to 44 (DS), Asp82, and Lys112. Residue Glu114 coordinates Mg(2+). The Proton acceptor role is filled by Glu181.

It belongs to the PanB family. Homodecamer; pentamer of dimers. The cofactor is Mg(2+).

The protein resides in the cytoplasm. It catalyses the reaction 3-methyl-2-oxobutanoate + (6R)-5,10-methylene-5,6,7,8-tetrahydrofolate + H2O = 2-dehydropantoate + (6S)-5,6,7,8-tetrahydrofolate. It participates in cofactor biosynthesis; (R)-pantothenate biosynthesis; (R)-pantoate from 3-methyl-2-oxobutanoate: step 1/2. In terms of biological role, catalyzes the reversible reaction in which hydroxymethyl group from 5,10-methylenetetrahydrofolate is transferred onto alpha-ketoisovalerate to form ketopantoate. The polypeptide is 3-methyl-2-oxobutanoate hydroxymethyltransferase (Geobacillus kaustophilus (strain HTA426)).